The following is a 175-amino-acid chain: Nucleoside triphosphate/diphosphate phosphatase (175 aa).

The Proton donor role is filled by R23. Residues N87, D103, D105, D107, D120, and E123 each coordinate Mg(2+).

This sequence belongs to the Ntdp family. Mg(2+) serves as cofactor.

It carries out the reaction a ribonucleoside 5'-triphosphate + H2O = a ribonucleoside 5'-diphosphate + phosphate + H(+). The enzyme catalyses a ribonucleoside 5'-diphosphate + H2O = a ribonucleoside 5'-phosphate + phosphate + H(+). Has nucleoside phosphatase activity towards nucleoside triphosphates and nucleoside diphosphates. This is Nucleoside triphosphate/diphosphate phosphatase from Listeria monocytogenes serotype 4b (strain CLIP80459).